A 246-amino-acid chain; its full sequence is V-type proton ATPase subunit D (246 aa).

Belongs to the V-ATPase D subunit family. In terms of assembly, V-ATPase is a heteromultimeric enzyme made up of two complexes: the ATP-hydrolytic V1 complex and the proton translocation V0 complex. The V1 complex consists of three catalytic AB heterodimers that form a heterohexamer, three peripheral stalks each consisting of EG heterodimers, one central rotor including subunits D and F, and the regulatory subunits C and H. The proton translocation complex V0 consists of the proton transport subunit a, a ring of proteolipid subunits c9c'', rotary subunit d, subunits e and f, and the accessory subunits VhaAC45 and ATP6AP2.

Subunit of the V1 complex of vacuolar(H+)-ATPase (V-ATPase), a multisubunit enzyme composed of a peripheral complex (V1) that hydrolyzes ATP and a membrane integral complex (V0) that translocates protons. V-ATPase is responsible for acidifying and maintaining the pH of intracellular compartments and in some cell types, is targeted to the plasma membrane, where it is responsible for acidifying the extracellular environment. This Manduca sexta (Tobacco hawkmoth) protein is V-type proton ATPase subunit D.